A 517-amino-acid chain; its full sequence is Glutamate--tRNA ligase (517 aa).

The 'HIGH' region signature appears at 10–20; it reads PSPSGFLHVGG. Cys107, Cys109, Cys134, and Asp136 together coordinate Zn(2+). Residues 250–254 carry the 'KMSKS' region motif; it reads KLSKR. Lys253 contacts ATP.

Belongs to the class-I aminoacyl-tRNA synthetase family. Glutamate--tRNA ligase type 1 subfamily. Monomer. Zn(2+) serves as cofactor.

The protein localises to the cytoplasm. It carries out the reaction tRNA(Glu) + L-glutamate + ATP = L-glutamyl-tRNA(Glu) + AMP + diphosphate. Functionally, catalyzes the attachment of glutamate to tRNA(Glu) in a two-step reaction: glutamate is first activated by ATP to form Glu-AMP and then transferred to the acceptor end of tRNA(Glu). The chain is Glutamate--tRNA ligase from Leptospira biflexa serovar Patoc (strain Patoc 1 / ATCC 23582 / Paris).